Here is a 388-residue protein sequence, read N- to C-terminus: MKKTTEGAFYTREYRNLFKEFGYSEAEIQERVKDTWEQLFGDNPETKIYYEVGDDLGYLLDTGNLDVRTEGMSYGMMMAVQMDRKDIFDRIWNWTMKNMYMTEGVHAGYFAWSCQPDGTKNSWGPAPDGEEYFALALFFASHRWGDGDEQPFNYSEQARKLLHTCVHNGEGGPGHPMWNRDNKLIKFIPEVEFSDPSYHLPHFYELFSLWANEEDRVFWKEAAEASREYLKIACHPETGLAPEYAYYDGTPNDEKGYGHFFSDSYRVAANIGLDAEWFGGSEWSAEEINKIQAFFADKEPEDYRRYKIDGEPFEEKSLHPVGLIATNAMGSLASVDGPYAKANVDLFWNTPVRTGNRRYYDNCLYLFAMLALSGNFKIWFPEGQEEEH.

Glu70 serves as the catalytic Proton donor. Residue Asp263 is the Proton acceptor of the active site.

Belongs to the glycosyl hydrolase 8 (cellulase D) family.

The catalysed reaction is Hydrolysis of (1-&gt;4)-beta-D-xylose residues from the reducing end of oligosaccharides.. In terms of biological role, hydrolyzes xylooligosaccharides with a degree of polymerization of greater than or equal to 3, releasing xylose from the reducing end. Only hydrolyzes the beta anomers of xylooligosaccharides, with inversion of anomeric configuration. Hydrolyzes the glucose and xylose-based trisaccharides where xylose is located at the -1 subsite, GXX, XXG and GXG. Does not hydrolyze xylan, chitosan, lichenan, curdlan or carboxymethylcellulose. The polypeptide is Reducing end xylose-releasing exo-oligoxylanase (Halalkalibacterium halodurans (strain ATCC BAA-125 / DSM 18197 / FERM 7344 / JCM 9153 / C-125) (Bacillus halodurans)).